Here is a 280-residue protein sequence, read N- to C-terminus: Dexamethasone-induced Ras-related protein 1 (280 aa).

The residue at position 11 (cysteine 11) is an S-nitrosocysteine. 31–38 (GSSKVGKT) contributes to the GTP binding site. The Effector region motif lies at 53-61 (YTPTIEDFH). Residues 78-82 (DTSGN) and 145-148 (NKGD) contribute to the GTP site. Residue cysteine 277 is modified to Cysteine methyl ester. The S-farnesyl cysteine moiety is linked to residue cysteine 277. The propeptide at 278–280 (VIS) is removed in mature form.

This sequence belongs to the small GTPase superfamily. RasD family. As to quaternary structure, component of a complex, at least composed of APBB1, RASD1/DEXRAS1 and APP. Interacts with APBB1/FE65. Forms a ternary complex with CAPON and NOS1. Post-translationally, S-nitrosylation stimulates guanine-nucleotide exchange activity. As to expression, expressed in brain, heart, kidney and liver.

The protein localises to the cell membrane. Its subcellular location is the cytoplasm. It localises to the perinuclear region. It is found in the nucleus. Its function is as follows. Small GTPase. Negatively regulates the transcription regulation activity of the APBB1/FE65-APP complex via its interaction with APBB1/FE65. This is Dexamethasone-induced Ras-related protein 1 (Rasd1) from Mus musculus (Mouse).